Consider the following 36-residue polypeptide: Pancreatic polypeptide (36 aa).

At Tyr-36 the chain carries Tyrosine amide.

It belongs to the NPY family.

It localises to the secreted. Functionally, hormone secreted by pancreatic cells that acts as a regulator of pancreatic and gastrointestinal functions probably by signaling through the G protein-coupled receptor NPY4R2. The polypeptide is Pancreatic polypeptide (PPY) (Chinchilla chinchilla (Short-tailed chinchilla)).